The following is a 372-amino-acid chain: Delta-type opioid receptor (372 aa).

At 1 to 47 the chain is on the extracellular side; the sequence is MEPVPSARAELQFSLLANVSDTFPSAFPSASANASGSPGARSASSLA. 2 N-linked (GlcNAc...) asparagine glycosylation sites follow: N18 and N33. The helical transmembrane segment at 48–75 threads the bilayer; that stretch reads LAIAITALYSAVCAVGLLGNVLVMFGIV. Residues 76–85 lie on the Cytoplasmic side of the membrane; sequence RYTKLKTATN. Residues 86-110 form a helical membrane-spanning segment; sequence IYIFNLALADALATSTLPFQSAKYL. The Extracellular portion of the chain corresponds to 111–122; it reads METWPFGELLCK. An intrachain disulfide couples C121 to C198. A helical membrane pass occupies residues 123–144; it reads AVLSIDYYNMFTSIFTLTMMSV. Residues 145 to 163 are Cytoplasmic-facing; it reads DRYIAVCHPVKALDFRTPA. Residues 164 to 186 form a helical membrane-spanning segment; that stretch reads KAKLINICIWVLASGVGVPIMVM. Topologically, residues 187–206 are extracellular; it reads AVTQPRDGAVVCTLQFPSPS. The chain crosses the membrane as a helical span at residues 207–238; the sequence is WYWDTVTKICVFLFAFVVPILIITVCYGLMLL. Over 239 to 261 the chain is Cytoplasmic; it reads RLRSVRLLSGSKEKDRSLRRITR. A helical membrane pass occupies residues 262-284; that stretch reads MVLVVVGAFVVCWAPIHIFVIVW. Over 285–299 the chain is Extracellular; that stretch reads TLVDINRRDPLVVAA. Residues 300–321 form a helical membrane-spanning segment; sequence LHLCIALGYANSSLNPVLYAFL. The Cytoplasmic segment spans residues 322–372; it reads DENFKRCFRQLCRAPCGGQEPGSLRRPRQATARERVTACTPSDGPGGGAAA. The S-palmitoyl cysteine moiety is linked to residue C333. Residues 340-372 are disordered; the sequence is QEPGSLRRPRQATARERVTACTPSDGPGGGAAA.

The protein belongs to the G-protein coupled receptor 1 family. In terms of assembly, may form homooligomers. Forms a heterodimer with OPRM1. Interacts with GPRASP1. Interacts with RTP4; the interaction promotes cell surface localization of the OPRD1-OPRM1 heterodimer. Ubiquitinated. A basal ubiquitination seems not to be related to degradation. Ubiquitination is increased upon formation of OPRM1:OPRD1 oligomers leading to proteasomal degradation; the ubiquitination is diminished by RTP4. Detected in brain, brain stem and brain cortex.

It is found in the cell membrane. Its function is as follows. G-protein coupled receptor that functions as a receptor for endogenous enkephalins and for a subset of other opioids. Ligand binding causes a conformation change that triggers signaling via guanine nucleotide-binding proteins (G proteins) and modulates the activity of down-stream effectors, such as adenylate cyclase. Signaling leads to the inhibition of adenylate cyclase activity. Inhibits neurotransmitter release by reducing calcium ion currents and increasing potassium ion conductance. Plays a role in the perception of pain and in opiate-mediated analgesia. Plays a role in developing analgesic tolerance to morphine. The sequence is that of Delta-type opioid receptor (Oprd1) from Rattus norvegicus (Rat).